We begin with the raw amino-acid sequence, 197 residues long: Pyridoxal 5'-phosphate synthase subunit PdxT (197 aa).

52–54 contacts L-glutamine; the sequence is GES. Cys-84 functions as the Nucleophile in the catalytic mechanism. L-glutamine is bound by residues Arg-116 and 143–144; that span reads IR. Active-site charge relay system residues include His-179 and Glu-181.

Belongs to the glutaminase PdxT/SNO family. In terms of assembly, in the presence of PdxS, forms a dodecamer of heterodimers. Only shows activity in the heterodimer.

The enzyme catalyses aldehydo-D-ribose 5-phosphate + D-glyceraldehyde 3-phosphate + L-glutamine = pyridoxal 5'-phosphate + L-glutamate + phosphate + 3 H2O + H(+). The catalysed reaction is L-glutamine + H2O = L-glutamate + NH4(+). The protein operates within cofactor biosynthesis; pyridoxal 5'-phosphate biosynthesis. Catalyzes the hydrolysis of glutamine to glutamate and ammonia as part of the biosynthesis of pyridoxal 5'-phosphate. The resulting ammonia molecule is channeled to the active site of PdxS. This chain is Pyridoxal 5'-phosphate synthase subunit PdxT, found in Ignicoccus hospitalis (strain KIN4/I / DSM 18386 / JCM 14125).